The following is a 250-amino-acid chain: tRNA (guanine-N(1)-)-methyltransferase (250 aa).

S-adenosyl-L-methionine contacts are provided by residues Gly-116 and 136 to 141; that span reads IGDYVL.

The protein belongs to the RNA methyltransferase TrmD family. In terms of assembly, homodimer.

The protein localises to the cytoplasm. It catalyses the reaction guanosine(37) in tRNA + S-adenosyl-L-methionine = N(1)-methylguanosine(37) in tRNA + S-adenosyl-L-homocysteine + H(+). Functionally, specifically methylates guanosine-37 in various tRNAs. This is tRNA (guanine-N(1)-)-methyltransferase from Pseudomonas syringae pv. tomato (strain ATCC BAA-871 / DC3000).